The sequence spans 497 residues: Glycerol kinase (497 aa).

Threonine 12 contacts ADP. Threonine 12, threonine 13, and serine 14 together coordinate ATP. Threonine 12 contacts sn-glycerol 3-phosphate. Arginine 16 is an ADP binding site. Sn-glycerol 3-phosphate-binding residues include arginine 82, glutamate 83, tyrosine 134, and aspartate 243. Positions 82, 83, 134, 243, and 244 each coordinate glycerol. ADP is bound by residues threonine 265 and glycine 308. Residues threonine 265, glycine 308, glutamine 312, and glycine 409 each coordinate ATP. Residues glycine 409 and asparagine 413 each contribute to the ADP site.

The protein belongs to the FGGY kinase family.

It catalyses the reaction glycerol + ATP = sn-glycerol 3-phosphate + ADP + H(+). It participates in polyol metabolism; glycerol degradation via glycerol kinase pathway; sn-glycerol 3-phosphate from glycerol: step 1/1. Its activity is regulated as follows. Inhibited by fructose 1,6-bisphosphate (FBP). In terms of biological role, key enzyme in the regulation of glycerol uptake and metabolism. Catalyzes the phosphorylation of glycerol to yield sn-glycerol 3-phosphate. The polypeptide is Glycerol kinase (Nitratidesulfovibrio vulgaris (strain DSM 19637 / Miyazaki F) (Desulfovibrio vulgaris)).